Reading from the N-terminus, the 328-residue chain is Probable tRNA-dihydrouridine synthase (328 aa).

18-20 (PME) provides a ligand contact to FMN. Cys-105 functions as the Proton donor in the catalytic mechanism. FMN is bound by residues Lys-143, 208–210 (NGD), and 232–233 (GR).

It belongs to the Dus family. FMN serves as cofactor.

It catalyses the reaction a 5,6-dihydrouridine in tRNA + NAD(+) = a uridine in tRNA + NADH + H(+). The catalysed reaction is a 5,6-dihydrouridine in tRNA + NADP(+) = a uridine in tRNA + NADPH + H(+). Functionally, catalyzes the synthesis of 5,6-dihydrouridine (D), a modified base found in the D-loop of most tRNAs, via the reduction of the C5-C6 double bond in target uridines. This chain is Probable tRNA-dihydrouridine synthase (dus), found in Staphylococcus aureus (strain Mu50 / ATCC 700699).